The chain runs to 148 residues: Putative cyclin-dependent kinase inhibitor SPL2 (148 aa).

Phosphoserine occurs at positions 59 and 86.

The protein localises to the cytoplasmic granule. It is found in the cytoplasm. In terms of biological role, putative cyclin-dependent kinase (CDK) inhibitor necessary and sufficient for PHO pathway-dependent down-regulation of low-affinity phosphate transport. In Saccharomyces cerevisiae (strain YJM789) (Baker's yeast), this protein is Putative cyclin-dependent kinase inhibitor SPL2 (SPL2).